We begin with the raw amino-acid sequence, 157 residues long: uncharacterized protein (157 aa).

Positions 6-157 (HDELFQAIQQ…AFFNLWIKYM (152 aa)) constitute an HTH marR-type domain. A DNA-binding region (H-T-H motif) is located at residues 66–89 (NSFLASRLHISKAAVSKAVHALLK).

It is found in the cytoplasm. This is an uncharacterized protein from Bacillus subtilis (strain 168).